The primary structure comprises 426 residues: Serine hydroxymethyltransferase (426 aa).

(6S)-5,6,7,8-tetrahydrofolate contacts are provided by residues leucine 118 and glycine 122–leucine 124. Lysine 227 carries the post-translational modification N6-(pyridoxal phosphate)lysine.

It belongs to the SHMT family. Homodimer. The cofactor is pyridoxal 5'-phosphate.

It is found in the cytoplasm. It catalyses the reaction (6R)-5,10-methylene-5,6,7,8-tetrahydrofolate + glycine + H2O = (6S)-5,6,7,8-tetrahydrofolate + L-serine. The protein operates within one-carbon metabolism; tetrahydrofolate interconversion. It participates in amino-acid biosynthesis; glycine biosynthesis; glycine from L-serine: step 1/1. Its function is as follows. Catalyzes the reversible interconversion of serine and glycine with tetrahydrofolate (THF) serving as the one-carbon carrier. This reaction serves as the major source of one-carbon groups required for the biosynthesis of purines, thymidylate, methionine, and other important biomolecules. Also exhibits THF-independent aldolase activity toward beta-hydroxyamino acids, producing glycine and aldehydes, via a retro-aldol mechanism. This is Serine hydroxymethyltransferase from Mycolicibacterium paratuberculosis (strain ATCC BAA-968 / K-10) (Mycobacterium paratuberculosis).